We begin with the raw amino-acid sequence, 343 residues long: Probable 4-hydroxy-tetrahydrodipicolinate reductase 1, chloroplastic (343 aa).

Residues 1–14 constitute a chloroplast transit peptide; the sequence is MLASTFATHPAAAA. Residues 167 to 169 and 190 to 193 each bind NAD(+); these read GTT and SPQM. His226 acts as the Proton donor/acceptor in catalysis. The active-site Proton donor is Lys230. Residue 235–236 participates in (S)-2,3,4,5-tetrahydrodipicolinate binding; the sequence is GT.

Belongs to the DapB family.

Its subcellular location is the plastid. The protein resides in the chloroplast. The catalysed reaction is (S)-2,3,4,5-tetrahydrodipicolinate + NAD(+) + H2O = (2S,4S)-4-hydroxy-2,3,4,5-tetrahydrodipicolinate + NADH + H(+). It catalyses the reaction (S)-2,3,4,5-tetrahydrodipicolinate + NADP(+) + H2O = (2S,4S)-4-hydroxy-2,3,4,5-tetrahydrodipicolinate + NADPH + H(+). It participates in amino-acid biosynthesis; L-lysine biosynthesis via DAP pathway; (S)-tetrahydrodipicolinate from L-aspartate: step 4/4. Its function is as follows. Catalyzes the conversion of 4-hydroxy-tetrahydrodipicolinate (HTPA) to tetrahydrodipicolinate. The sequence is that of Probable 4-hydroxy-tetrahydrodipicolinate reductase 1, chloroplastic (DAPB1) from Oryza sativa subsp. japonica (Rice).